The primary structure comprises 551 residues: Chaperonin GroEL (551 aa).

ATP is bound by residues 30–33 (TLGP), K51, 87–91 (DGTTT), G415, 478–480 (NAA), and D494.

This sequence belongs to the chaperonin (HSP60) family. As to quaternary structure, forms a cylinder of 14 subunits composed of two heptameric rings stacked back-to-back. Interacts with the co-chaperonin GroES.

The protein resides in the cytoplasm. It carries out the reaction ATP + H2O + a folded polypeptide = ADP + phosphate + an unfolded polypeptide.. Its function is as follows. Together with its co-chaperonin GroES, plays an essential role in assisting protein folding. The GroEL-GroES system forms a nano-cage that allows encapsulation of the non-native substrate proteins and provides a physical environment optimized to promote and accelerate protein folding. In Syntrophotalea carbinolica (strain DSM 2380 / NBRC 103641 / GraBd1) (Pelobacter carbinolicus), this protein is Chaperonin GroEL.